A 452-amino-acid polypeptide reads, in one-letter code: Adenylyltransferase and sulfurtransferase MOCS3 (452 aa).

ATP contacts are provided by residues glycine 99, aspartate 120, 127-131 (SNLHR), lysine 144, and 188-189 (DN). 2 residues coordinate Zn(2+): cysteine 230 and cysteine 233. Residue cysteine 247 is the Glycyl thioester intermediate; for adenylyltransferase activity of the active site. Residues cysteine 305 and cysteine 308 each coordinate Zn(2+). Positions 354 to 450 (KTKAHLLLDV…WTNQVDQSFP (97 aa)) constitute a Rhodanese domain. The active-site Cysteine persulfide intermediate; for sulfurtransferase activity is the cysteine 409.

In the N-terminal section; belongs to the HesA/MoeB/ThiF family. UBA4 subfamily. It depends on Zn(2+) as a cofactor.

It is found in the cytoplasm. The protein localises to the cytosol. The enzyme catalyses [molybdopterin-synthase sulfur-carrier protein]-C-terminal Gly-Gly + ATP + H(+) = [molybdopterin-synthase sulfur-carrier protein]-C-terminal Gly-Gly-AMP + diphosphate. It catalyses the reaction [molybdopterin-synthase sulfur-carrier protein]-C-terminal Gly-Gly-AMP + S-sulfanyl-L-cysteinyl-[cysteine desulfurase] + AH2 = [molybdopterin-synthase sulfur-carrier protein]-C-terminal-Gly-aminoethanethioate + L-cysteinyl-[cysteine desulfurase] + A + AMP + 2 H(+). Its pathway is tRNA modification; 5-methoxycarbonylmethyl-2-thiouridine-tRNA biosynthesis. The protein operates within cofactor biosynthesis; molybdopterin biosynthesis. Functionally, plays a central role in 2-thiolation of mcm(5)S(2)U at tRNA wobble positions of cytosolic tRNA(Lys), tRNA(Glu) and tRNA(Gln). Also essential during biosynthesis of the molybdenum cofactor. Acts by mediating the C-terminal thiocarboxylation of sulfur carriers URM1 and MOCS2A. Its N-terminus first activates URM1 and MOCS2A as acyl-adenylates (-COAMP), then the persulfide sulfur on the catalytic cysteine is transferred to URM1 and MOCS2A to form thiocarboxylation (-COSH) of their C-terminus. The reaction probably involves hydrogen sulfide that is generated from the persulfide intermediate and that acts as a nucleophile towards URM1 and MOCS2A. Subsequently, a transient disulfide bond is formed. Does not use thiosulfate as sulfur donor; NFS1 probably acting as a sulfur donor for thiocarboxylation reactions. The sequence is that of Adenylyltransferase and sulfurtransferase MOCS3 from Drosophila virilis (Fruit fly).